Reading from the N-terminus, the 216-residue chain is Probable nicotinate-nucleotide adenylyltransferase (216 aa).

It belongs to the NadD family.

It carries out the reaction nicotinate beta-D-ribonucleotide + ATP + H(+) = deamido-NAD(+) + diphosphate. It participates in cofactor biosynthesis; NAD(+) biosynthesis; deamido-NAD(+) from nicotinate D-ribonucleotide: step 1/1. Its function is as follows. Catalyzes the reversible adenylation of nicotinate mononucleotide (NaMN) to nicotinic acid adenine dinucleotide (NaAD). This chain is Probable nicotinate-nucleotide adenylyltransferase, found in Citrifermentans bemidjiense (strain ATCC BAA-1014 / DSM 16622 / JCM 12645 / Bem) (Geobacter bemidjiensis).